Reading from the N-terminus, the 195-residue chain is Granulocyte colony-stimulating factor (195 aa).

Residues 1–21 (MKLMALQLLLWHIALWMVPEA) form the signal peptide. Intrachain disulfides connect Cys-57/Cys-63 and Cys-85/Cys-95. Residue Thr-154 is glycosylated (O-linked (GalNAc...) threonine).

The protein belongs to the IL-6 superfamily. Monomer. Post-translationally, O-glycosylated.

It is found in the secreted. In terms of biological role, granulocyte/macrophage colony-stimulating factors are cytokines that act in hematopoiesis by controlling the production, differentiation, and function of 2 related white cell populations of the blood, the granulocytes and the monocytes-macrophages. This CSF induces granulocytes. This chain is Granulocyte colony-stimulating factor (CSF3), found in Sus scrofa (Pig).